Reading from the N-terminus, the 236-residue chain is MKFTFVTLFENLVKPYFNDSILARAVENNKIDVNFINPRDHTTQKHFKVDEYMIGGGAGLLMMPQPLNDTLKKIKENDPDVHIVFLTPAAKKFNQKDAKRLAGKKHICFVCGRYEGIDERIVELWADEVFCVGDFILTGGELGALCLADAIARNIEGVLGNSQSLAIESFEDGLLEAPSFTKPDVFDGNFVVSEFLKGNHAKIRLLKNKMAHCKTRFFRPDLYQKLKPQIKEKHEK.

S-adenosyl-L-methionine-binding positions include Gly-112 and 132-137; that span reads VGDFIL.

It belongs to the RNA methyltransferase TrmD family. In terms of assembly, homodimer.

It localises to the cytoplasm. The catalysed reaction is guanosine(37) in tRNA + S-adenosyl-L-methionine = N(1)-methylguanosine(37) in tRNA + S-adenosyl-L-homocysteine + H(+). Specifically methylates guanosine-37 in various tRNAs. The polypeptide is tRNA (guanine-N(1)-)-methyltransferase (Campylobacter curvus (strain 525.92)).